The following is a 368-amino-acid chain: Putative glutamate--cysteine ligase 2 (368 aa).

This sequence belongs to the glutamate--cysteine ligase type 2 family. YbdK subfamily.

It catalyses the reaction L-cysteine + L-glutamate + ATP = gamma-L-glutamyl-L-cysteine + ADP + phosphate + H(+). In terms of biological role, ATP-dependent carboxylate-amine ligase which exhibits weak glutamate--cysteine ligase activity. The polypeptide is Putative glutamate--cysteine ligase 2 (Pseudomonas putida (strain ATCC 47054 / DSM 6125 / CFBP 8728 / NCIMB 11950 / KT2440)).